The primary structure comprises 177 residues: Large ribosomal subunit protein uL6 (177 aa).

Lys44 bears the N6-acetyllysine mark.

Belongs to the universal ribosomal protein uL6 family. In terms of assembly, part of the 50S ribosomal subunit.

This protein binds to the 23S rRNA, and is important in its secondary structure. It is located near the subunit interface in the base of the L7/L12 stalk, and near the tRNA binding site of the peptidyltransferase center. This chain is Large ribosomal subunit protein uL6, found in Escherichia coli O139:H28 (strain E24377A / ETEC).